A 193-amino-acid polypeptide reads, in one-letter code: Orotate phosphoribosyltransferase (193 aa).

5-phospho-alpha-D-ribose 1-diphosphate is bound by residues R85, K89, H91, and 111–119 (DDVLTTGKS). The orotate site is built by T115 and R143.

The protein belongs to the purine/pyrimidine phosphoribosyltransferase family. PyrE subfamily. Homodimer. It depends on Mg(2+) as a cofactor.

It catalyses the reaction orotidine 5'-phosphate + diphosphate = orotate + 5-phospho-alpha-D-ribose 1-diphosphate. Its pathway is pyrimidine metabolism; UMP biosynthesis via de novo pathway; UMP from orotate: step 1/2. Catalyzes the transfer of a ribosyl phosphate group from 5-phosphoribose 1-diphosphate to orotate, leading to the formation of orotidine monophosphate (OMP). This chain is Orotate phosphoribosyltransferase, found in Pyrobaculum islandicum (strain DSM 4184 / JCM 9189 / GEO3).